A 94-amino-acid chain; its full sequence is Large ribosomal subunit protein bL27 (94 aa).

Residues 1 to 9 constitute a propeptide that is removed on maturation; that stretch reads MLKLNLQFF. Residues 13-32 form a disordered region; sequence KGLGSTKNGRDSESKRLGAK. Positions 20–32 are enriched in basic and acidic residues; it reads NGRDSESKRLGAK.

This sequence belongs to the bacterial ribosomal protein bL27 family. In terms of processing, the N-terminus is cleaved by ribosomal processing cysteine protease Prp.

The protein is Large ribosomal subunit protein bL27 of Staphylococcus saprophyticus subsp. saprophyticus (strain ATCC 15305 / DSM 20229 / NCIMB 8711 / NCTC 7292 / S-41).